Consider the following 304-residue polypeptide: uncharacterized protein (304 aa).

This is an uncharacterized protein from Acanthamoeba polyphaga (Amoeba).